A 176-amino-acid polypeptide reads, in one-letter code: Adenine phosphoribosyltransferase (176 aa).

It belongs to the purine/pyrimidine phosphoribosyltransferase family. In terms of assembly, homodimer.

The protein resides in the cytoplasm. It catalyses the reaction AMP + diphosphate = 5-phospho-alpha-D-ribose 1-diphosphate + adenine. It functions in the pathway purine metabolism; AMP biosynthesis via salvage pathway; AMP from adenine: step 1/1. In terms of biological role, catalyzes a salvage reaction resulting in the formation of AMP, that is energically less costly than de novo synthesis. The polypeptide is Adenine phosphoribosyltransferase (Borreliella burgdorferi (strain ATCC 35210 / DSM 4680 / CIP 102532 / B31) (Borrelia burgdorferi)).